We begin with the raw amino-acid sequence, 314 residues long: Olfactory receptor 5P67 (314 aa).

Residues 1 to 28 are Extracellular-facing; that stretch reads MAFLEDGNHTAVTEFILLGLTDDPVLRV. Residue N8 is glycosylated (N-linked (GlcNAc...) asparagine). A helical membrane pass occupies residues 29–49; that stretch reads ILFTIILCIYLVTVSGNLSTI. Over 50-57 the chain is Cytoplasmic; sequence LLIRVSSQ. Residues 58–78 form a helical membrane-spanning segment; the sequence is LHHPMYFFLSHVGSVDIGYSS. The Extracellular segment spans residues 79–102; sequence SVTPNMLVNFLVEKHTIAYLGCGI. C100 and C192 form a disulfide bridge. Residues 103–123 traverse the membrane as a helical segment; the sequence is QLSSAAFFGTAECFLLATMAY. Topologically, residues 124-136 are cytoplasmic; the sequence is DRFVAICNPLLYS. Residues 137 to 157 traverse the membrane as a helical segment; it reads TKMSTQTCIQLVVGSYTGGIL. Topologically, residues 158–199 are extracellular; the sequence is NASFAIISFFSFLFCGPNRINHFYCDFAPLVELSCSDINVSV. Residues 200–220 form a helical membrane-spanning segment; that stretch reads VITTIFSASVTIITVFVIAIS. Over 221–240 the chain is Cytoplasmic; sequence YTYILITILKMRSTEGRHKA. Residues 241–261 traverse the membrane as a helical segment; it reads FSTCTSYLTAVTLFYGTVTFI. The Extracellular portion of the chain corresponds to 262 to 274; sequence YVVPKSNYSTDQN. N268 is a glycosylation site (N-linked (GlcNAc...) asparagine). A helical membrane pass occupies residues 275–295; sequence KVASVFYIVVIPMLNPLIYSL. The Cytoplasmic segment spans residues 296–314; that stretch reads RNNDIKGALKRQLGKKTFS.

It belongs to the G-protein coupled receptor 1 family.

It localises to the cell membrane. Functionally, potential odorant receptor. In Mus musculus (Mouse), this protein is Olfactory receptor 5P67.